The chain runs to 107 residues: Potassium voltage-gated channel subfamily E member 3 (107 aa).

N-linked (GlcNAc...) asparagine glycosylation is found at Asn5, Asn22, and Asn45. The disordered stretch occupies residues 31–54 (CRPGPGPGSGTGPDNQTEDHRASL). The helical transmembrane segment at 61-81 (SYMYILFVMFLFAVTVGSLIL) threads the bilayer. The segment at 72-83 (FAVTVGSLILGY) is interaction with KCNQ1. Over 82–103 (GYTRSRKVDKRSDPYHVYIKNR) the chain is Cytoplasmic.

This sequence belongs to the potassium channel KCNE family. In terms of assembly, interacts with KCNB1. Interacts with KCNC2. Associates with KCNC4/Kv3.4. Interacts with KCNQ1; associates with a KCNQ1:KCNE3 stoichiometry of 4:4; produces a current with nearly instantaneous activation with a linear current-voltage relationship and alters membrane raft localization; affects KCNQ1 structure and gating properties.

The protein localises to the cell membrane. It is found in the cytoplasm. It localises to the perikaryon. Its subcellular location is the cell projection. The protein resides in the dendrite. The protein localises to the membrane raft. Functionally, ancillary protein that functions as a regulatory subunit of the voltage-gated potassium (Kv) channel complex composed of pore-forming and potassium-conducting alpha subunits and of regulatory beta subunits. KCNE3 beta subunit modulates the gating kinetics and enhances stability of the channel complex. Alters the gating of the delayed rectifier Kv channel containing KCNB1 alpha subunit. Associates with KCNC4/Kv3.4 alpha subunit to form the subthreshold Kv channel in skeletal muscle and to establish the resting membrane potential (RMP) in muscle cells. Association with KCNQ1/KCLQT1 alpha subunit may form the intestinal cAMP-stimulated potassium channel involved in chloride secretion that produces a current with nearly instantaneous activation with a linear current-voltage relationship. This chain is Potassium voltage-gated channel subfamily E member 3, found in Rattus norvegicus (Rat).